A 62-amino-acid polypeptide reads, in one-letter code: Large ribosomal subunit protein bL28 (62 aa).

Residues 1 to 22 (MAKKCAISGKGPMSGNNVSHAK) form a disordered region.

Belongs to the bacterial ribosomal protein bL28 family.

The chain is Large ribosomal subunit protein bL28 from Sulfurimonas denitrificans (strain ATCC 33889 / DSM 1251) (Thiomicrospira denitrificans (strain ATCC 33889 / DSM 1251)).